A 453-amino-acid polypeptide reads, in one-letter code: UPF0210 protein MM_0081 (453 aa).

This sequence belongs to the UPF0210 family.

This is UPF0210 protein MM_0081 from Methanosarcina mazei (strain ATCC BAA-159 / DSM 3647 / Goe1 / Go1 / JCM 11833 / OCM 88) (Methanosarcina frisia).